The following is a 464-amino-acid chain: Aspartyl protease 37 (464 aa).

Residues 1 to 19 form the signal peptide; sequence MNAAVLLLLLALAALPASC. A glycan (N-linked (GlcNAc...) asparagine) is linked at asparagine 41. In terms of domain architecture, Peptidase A1 spans 89–456; the sequence is YLVKLGIGTP…NLRRGRVTFV (368 aa). The active site involves aspartate 107. Residues cysteine 117 and cysteine 123 are joined by a disulfide bond. Asparagine 174 and asparagine 261 each carry an N-linked (GlcNAc...) asparagine glycan. Residues 299-311 are compositionally biased toward low complexity; sequence TTTTTATATATAP. Positions 299 to 319 are disordered; that stretch reads TTTTTATATATAPAPAPTPSP. An N-linked (GlcNAc...) asparagine glycan is attached at asparagine 320. Aspartate 337 is a catalytic residue. Cysteine 376 and cysteine 420 form a disulfide bridge.

The protein belongs to the peptidase A1 family.

In terms of biological role, anther-specific aspartic protease involved in tapetal programmed cell death (PCD). Directly regulated by the transcription factor EAT1/DTD in anthers during tapetum PCD and degeneration. This Oryza sativa subsp. japonica (Rice) protein is Aspartyl protease 37.